The sequence spans 299 residues: Putative arsenical pump-driving ATPase 2 (299 aa).

8-15 (GKGGVGKT) contributes to the ATP binding site.

The protein belongs to the arsA ATPase family.

The enzyme catalyses arsenite(in) + ATP + H2O = arsenite(out) + ADP + phosphate + H(+). In terms of biological role, anion-transporting ATPase. Catalyzes the extrusion of arsenite. The protein is Putative arsenical pump-driving ATPase 2 (arsA2) of Aquifex aeolicus (strain VF5).